The following is a 983-amino-acid chain: Polyhomeotic-like protein 3 (983 aa).

Disordered stretches follow at residues M1–P34, L103–S149, V225–T283, L313–Q332, L339–P410, P477–P509, and D601–I620. 2 stretches are compositionally biased toward low complexity: residues T9–S29 and L103–S126. Residues I127 to I139 show a composition bias toward polar residues. The segment covering S140–S149 has biased composition (low complexity). Residues V225 to I257 are compositionally biased toward polar residues. Over residues S258 to E271 the composition is skewed to basic and acidic residues. S263 and S272 each carry phosphoserine. Over residues S274 to T283 the composition is skewed to polar residues. Phosphoserine is present on S315. Residues S365–T383 are compositionally biased toward polar residues. Over residues V384–V398 the composition is skewed to low complexity. A compositionally biased stretch (polar residues) spans P477 to Y489. The span at S490 to S506 shows a compositional bias: low complexity. Phosphothreonine occurs at positions 609 and 614. S616 bears the Phosphoserine mark. Glycyl lysine isopeptide (Lys-Gly) (interchain with G-Cter in SUMO2) cross-links involve residues K691 and K732. Positions K691–V720 match the HD1 motif. Phosphoserine occurs at positions 761 and 762. Residues E776–K810 form an FCS-type zinc finger. C785, C788, C804, and C808 together coordinate Zn(2+). K810 is covalently cross-linked (Glycyl lysine isopeptide (Lys-Gly) (interchain with G-Cter in SUMO2)). 2 disordered regions span residues R827 to A847 and E864 to E889. The SAM domain maps to W919 to S983.

Component of a PRC1-like complex.

It localises to the nucleus. Component of a Polycomb group (PcG) multiprotein PRC1-like complex, a complex class required to maintain the transcriptionally repressive state of many genes, including Hox genes, throughout development. PcG PRC1 complex acts via chromatin remodeling and modification of histones; it mediates monoubiquitination of histone H2A 'Lys-119', rendering chromatin heritably changed in its expressibility. The sequence is that of Polyhomeotic-like protein 3 (PHC3) from Homo sapiens (Human).